A 359-amino-acid polypeptide reads, in one-letter code: Phosphate acyltransferase (359 aa).

Residues 338-359 (LEGAAGRAARPPPPRRASSHDA) are disordered.

This sequence belongs to the PlsX family. In terms of assembly, homodimer. Probably interacts with PlsY.

The protein localises to the cytoplasm. The enzyme catalyses a fatty acyl-[ACP] + phosphate = an acyl phosphate + holo-[ACP]. The protein operates within lipid metabolism; phospholipid metabolism. Functionally, catalyzes the reversible formation of acyl-phosphate (acyl-PO(4)) from acyl-[acyl-carrier-protein] (acyl-ACP). This enzyme utilizes acyl-ACP as fatty acyl donor, but not acyl-CoA. This Anaeromyxobacter sp. (strain Fw109-5) protein is Phosphate acyltransferase.